The following is a 381-amino-acid chain: MSQLPIRYEFIKSCKQTGARLGRVHTPHGSFDTPVFMPVGTLATVKTMAPEELKAMEAGIILSNTYHLWLRPGHDIVKEAGGLHKFMNWDRAILTDSGGFQVFSLSEFRKIEEEGVHFRNHLNGDKLFLSPEKAMDIQNALGSDIMMAFDECPPYPAEYDYMKRSVERTSRWAERCLTAHQRPEDQGLFGIIQGGEYEELRKQSAKDLVSLDFPGYAIGGLSVGEPKDVMNRVLEFTTPLLPADKPRYLMGVGSPDSLIDGAIRGVDMFDCVLPTRIARNGTLMTSEGRLVVKNAKYERDFRPIDENCDCYTCKNYTRAYIRHLIKTNETFGIRLTTYHNLHFLLKLMEQVREAIREDRLGDFKEEFFERYGFNEPNAKNF.

Aspartate 96 serves as the catalytic Proton acceptor. Residues 96 to 100 (DSGGF), aspartate 150, glutamine 193, and glycine 220 contribute to the substrate site. Residues 251–257 (GVGSPDS) are RNA binding. Aspartate 270 serves as the catalytic Nucleophile. The interval 275–279 (TRIAR) is RNA binding; important for wobble base 34 recognition. Zn(2+) contacts are provided by cysteine 308, cysteine 310, cysteine 313, and histidine 339.

Belongs to the queuine tRNA-ribosyltransferase family. As to quaternary structure, homodimer. Within each dimer, one monomer is responsible for RNA recognition and catalysis, while the other monomer binds to the replacement base PreQ1. Requires Zn(2+) as cofactor.

The enzyme catalyses 7-aminomethyl-7-carbaguanine + guanosine(34) in tRNA = 7-aminomethyl-7-carbaguanosine(34) in tRNA + guanine. It functions in the pathway tRNA modification; tRNA-queuosine biosynthesis. Functionally, catalyzes the base-exchange of a guanine (G) residue with the queuine precursor 7-aminomethyl-7-deazaguanine (PreQ1) at position 34 (anticodon wobble position) in tRNAs with GU(N) anticodons (tRNA-Asp, -Asn, -His and -Tyr). Catalysis occurs through a double-displacement mechanism. The nucleophile active site attacks the C1' of nucleotide 34 to detach the guanine base from the RNA, forming a covalent enzyme-RNA intermediate. The proton acceptor active site deprotonates the incoming PreQ1, allowing a nucleophilic attack on the C1' of the ribose to form the product. After dissociation, two additional enzymatic reactions on the tRNA convert PreQ1 to queuine (Q), resulting in the hypermodified nucleoside queuosine (7-(((4,5-cis-dihydroxy-2-cyclopenten-1-yl)amino)methyl)-7-deazaguanosine). The sequence is that of Queuine tRNA-ribosyltransferase from Bacillus pumilus (strain SAFR-032).